Here is a 379-residue protein sequence, read N- to C-terminus: MQSPEFLSASSRLTVDLTALADNWRAMNERSGKARAAAVLKADAYGLGVVHAAPALYAAGARDFFVASVEEGADLRPLVPDGRIYILAGMWPGNEELFFENDLVPIINSEEQLAVFMAALSERGDHPCVLHVDTGMNRLGLSPEEALALAHDPARPASFSPVLVMSHLACADDPGHPMNRYQLQRFREVTAAFEGVPASLANSGGVFLGADYHFDLTRPGIAVYGGEAVNGAVNPMKAVVTAEARIVQVRTVPSGGTASYGASVRFGRDSRIATVAIGYADGYHRSVSGGGVTLRQAMPSGAFGFLHGMKVPHVGRVTMDLSLFDVTDLPEAAVRAGDYIEVFGRNVVIDDVARAGGTIGYELLTSLGRRYHRTYVGGA.

Lysine 41 serves as the catalytic Proton acceptor; specific for D-alanine. The residue at position 41 (lysine 41) is an N6-(pyridoxal phosphate)lysine. Arginine 138 contributes to the substrate binding site. Tyrosine 260 acts as the Proton acceptor; specific for L-alanine in catalysis. Methionine 319 lines the substrate pocket.

Belongs to the alanine racemase family. Requires pyridoxal 5'-phosphate as cofactor.

It catalyses the reaction L-alanine = D-alanine. The protein operates within amino-acid biosynthesis; D-alanine biosynthesis; D-alanine from L-alanine: step 1/1. In terms of biological role, catalyzes the interconversion of L-alanine and D-alanine. May also act on other amino acids. The chain is Alanine racemase (alr) from Rhizobium meliloti (strain 1021) (Ensifer meliloti).